We begin with the raw amino-acid sequence, 203 residues long: N-(5'-phosphoribosyl)anthranilate isomerase (203 aa).

It belongs to the TrpF family.

It catalyses the reaction N-(5-phospho-beta-D-ribosyl)anthranilate = 1-(2-carboxyphenylamino)-1-deoxy-D-ribulose 5-phosphate. It functions in the pathway amino-acid biosynthesis; L-tryptophan biosynthesis; L-tryptophan from chorismate: step 3/5. This Geobacter sulfurreducens (strain ATCC 51573 / DSM 12127 / PCA) protein is N-(5'-phosphoribosyl)anthranilate isomerase.